Here is a 466-residue protein sequence, read N- to C-terminus: UDP-N-acetylmuramoylalanine--D-glutamate ligase (466 aa).

121–127 is an ATP binding site; the sequence is GTNGKST.

Belongs to the MurCDEF family.

It localises to the cytoplasm. It carries out the reaction UDP-N-acetyl-alpha-D-muramoyl-L-alanine + D-glutamate + ATP = UDP-N-acetyl-alpha-D-muramoyl-L-alanyl-D-glutamate + ADP + phosphate + H(+). Its pathway is cell wall biogenesis; peptidoglycan biosynthesis. In terms of biological role, cell wall formation. Catalyzes the addition of glutamate to the nucleotide precursor UDP-N-acetylmuramoyl-L-alanine (UMA). The polypeptide is UDP-N-acetylmuramoylalanine--D-glutamate ligase (Rhodopseudomonas palustris (strain HaA2)).